Reading from the N-terminus, the 320-residue chain is Malate dehydrogenase (320 aa).

NAD(+) is bound by residues 10 to 15 (GSGMIG) and Asp-34. Residues Arg-83 and Arg-89 each coordinate substrate. NAD(+) is bound by residues Asn-96 and 119–121 (ITN). Residues Asn-121 and Arg-152 each contribute to the substrate site. Catalysis depends on His-176, which acts as the Proton acceptor.

It belongs to the LDH/MDH superfamily. MDH type 3 family.

The enzyme catalyses (S)-malate + NAD(+) = oxaloacetate + NADH + H(+). In terms of biological role, catalyzes the reversible oxidation of malate to oxaloacetate. This is Malate dehydrogenase from Allorhizobium ampelinum (strain ATCC BAA-846 / DSM 112012 / S4) (Agrobacterium vitis (strain S4)).